The primary structure comprises 132 residues: Aspartate 1-decarboxylase (132 aa).

Residue Ser-25 is the Schiff-base intermediate with substrate; via pyruvic acid of the active site. Position 25 is a pyruvic acid (Ser) (Ser-25). Thr-57 contributes to the substrate binding site. The active-site Proton donor is the Tyr-58. A substrate-binding site is contributed by 73-75; it reads GAA.

Belongs to the PanD family. In terms of assembly, heterooctamer of four alpha and four beta subunits. Pyruvate is required as a cofactor. Is synthesized initially as an inactive proenzyme, which is activated by self-cleavage at a specific serine bond to produce a beta-subunit with a hydroxyl group at its C-terminus and an alpha-subunit with a pyruvoyl group at its N-terminus.

Its subcellular location is the cytoplasm. It catalyses the reaction L-aspartate + H(+) = beta-alanine + CO2. Its pathway is cofactor biosynthesis; (R)-pantothenate biosynthesis; beta-alanine from L-aspartate: step 1/1. In terms of biological role, catalyzes the pyruvoyl-dependent decarboxylation of aspartate to produce beta-alanine. This is Aspartate 1-decarboxylase from Geotalea uraniireducens (strain Rf4) (Geobacter uraniireducens).